The primary structure comprises 206 residues: High frequency lysogenization protein HflD homolog (206 aa).

The protein belongs to the HflD family.

The protein localises to the cytoplasm. It localises to the cell inner membrane. In Idiomarina loihiensis (strain ATCC BAA-735 / DSM 15497 / L2-TR), this protein is High frequency lysogenization protein HflD homolog.